The primary structure comprises 570 residues: Vacuolar protein sorting-associated protein 45 (570 aa).

2 positions are modified to phosphoserine: S307 and S441.

Belongs to the STXBP/unc-18/SEC1 family. In terms of assembly, interacts with ZFYVE20. Interacts with STX6.

It is found in the golgi apparatus membrane. Its subcellular location is the endosome membrane. Functionally, may play a role in vesicle-mediated protein trafficking from the Golgi stack through the trans-Golgi network. This Mus musculus (Mouse) protein is Vacuolar protein sorting-associated protein 45 (Vps45).